Here is a 181-residue protein sequence, read N- to C-terminus: 6,7-dimethyl-8-ribityllumazine synthase (181 aa).

Residues Y30, 61 to 63, and 87 to 89 contribute to the 5-amino-6-(D-ribitylamino)uracil site; these read ALE and CII. 92–93 provides a ligand contact to (2S)-2-hydroxy-3-oxobutyl phosphate; that stretch reads ET. H95 acts as the Proton donor in catalysis. Position 120 (N120) interacts with 5-amino-6-(D-ribitylamino)uracil. R134 lines the (2S)-2-hydroxy-3-oxobutyl phosphate pocket.

It belongs to the DMRL synthase family.

It catalyses the reaction (2S)-2-hydroxy-3-oxobutyl phosphate + 5-amino-6-(D-ribitylamino)uracil = 6,7-dimethyl-8-(1-D-ribityl)lumazine + phosphate + 2 H2O + H(+). Its pathway is cofactor biosynthesis; riboflavin biosynthesis; riboflavin from 2-hydroxy-3-oxobutyl phosphate and 5-amino-6-(D-ribitylamino)uracil: step 1/2. In terms of biological role, catalyzes the formation of 6,7-dimethyl-8-ribityllumazine by condensation of 5-amino-6-(D-ribitylamino)uracil with 3,4-dihydroxy-2-butanone 4-phosphate. This is the penultimate step in the biosynthesis of riboflavin. The sequence is that of 6,7-dimethyl-8-ribityllumazine synthase from Beijerinckia indica subsp. indica (strain ATCC 9039 / DSM 1715 / NCIMB 8712).